A 433-amino-acid chain; its full sequence is NADH-quinone oxidoreductase subunit D (433 aa).

This sequence belongs to the complex I 49 kDa subunit family. As to quaternary structure, NDH-1 is composed of 14 different subunits. Subunits NuoB, C, D, E, F, and G constitute the peripheral sector of the complex.

It localises to the cell membrane. The enzyme catalyses a quinone + NADH + 5 H(+)(in) = a quinol + NAD(+) + 4 H(+)(out). Its function is as follows. NDH-1 shuttles electrons from NADH, via FMN and iron-sulfur (Fe-S) centers, to quinones in the respiratory chain. The immediate electron acceptor for the enzyme in this species is believed to be a menaquinone. Couples the redox reaction to proton translocation (for every two electrons transferred, four hydrogen ions are translocated across the cytoplasmic membrane), and thus conserves the redox energy in a proton gradient. This chain is NADH-quinone oxidoreductase subunit D, found in Cutibacterium acnes (strain DSM 16379 / KPA171202) (Propionibacterium acnes).